The following is a 657-amino-acid chain: Glycogen debranching enzyme (657 aa).

Asp-336 acts as the Nucleophile in catalysis. The active-site Proton donor is Glu-371. Over residues 458-467 (NEANGEENRD) the composition is skewed to basic and acidic residues. The segment at 458 to 479 (NEANGEENRDGTNNNYSNNHGK) is disordered.

It belongs to the glycosyl hydrolase 13 family.

It carries out the reaction Hydrolysis of (1-&gt;6)-alpha-D-glucosidic linkages to branches with degrees of polymerization of three or four glucose residues in limit dextrin.. It functions in the pathway glycan degradation; glycogen degradation. In terms of biological role, removes maltotriose and maltotetraose chains that are attached by 1,6-alpha-linkage to the limit dextrin main chain, generating a debranched limit dextrin. This is Glycogen debranching enzyme from Shigella boydii serotype 18 (strain CDC 3083-94 / BS512).